A 232-amino-acid polypeptide reads, in one-letter code: Flagellar L-ring protein (232 aa).

The signal sequence occupies residues 1–21; sequence MQKNAAHTYAISSLLVLSLTG. Cysteine 22 is lipidated: N-palmitoyl cysteine. A lipid anchor (S-diacylglycerol cysteine) is attached at cysteine 22.

Belongs to the FlgH family. The basal body constitutes a major portion of the flagellar organelle and consists of four rings (L,P,S, and M) mounted on a central rod.

The protein localises to the cell outer membrane. The protein resides in the bacterial flagellum basal body. In terms of biological role, assembles around the rod to form the L-ring and probably protects the motor/basal body from shearing forces during rotation. This chain is Flagellar L-ring protein (flgH), found in Shigella flexneri.